A 202-amino-acid chain; its full sequence is Putative 3-methyladenine DNA glycosylase (202 aa).

Belongs to the DNA glycosylase MPG family.

This is Putative 3-methyladenine DNA glycosylase from Staphylococcus haemolyticus (strain JCSC1435).